The following is a 256-amino-acid chain: Hydroxyacylglutathione hydrolase (256 aa).

7 residues coordinate Zn(2+): histidine 53, histidine 55, aspartate 57, histidine 58, histidine 113, aspartate 130, and histidine 168.

The protein belongs to the metallo-beta-lactamase superfamily. Glyoxalase II family. As to quaternary structure, monomer. Zn(2+) serves as cofactor.

The catalysed reaction is an S-(2-hydroxyacyl)glutathione + H2O = a 2-hydroxy carboxylate + glutathione + H(+). Its pathway is secondary metabolite metabolism; methylglyoxal degradation; (R)-lactate from methylglyoxal: step 2/2. In terms of biological role, thiolesterase that catalyzes the hydrolysis of S-D-lactoyl-glutathione to form glutathione and D-lactic acid. The sequence is that of Hydroxyacylglutathione hydrolase from Tolumonas auensis (strain DSM 9187 / NBRC 110442 / TA 4).